The sequence spans 306 residues: GTPase Era (306 aa).

Residues lysine 14 to glutamate 181 enclose the Era-type G domain. The interval glycine 22 to serine 29 is G1. GTP is bound at residue glycine 22–serine 29. The segment at glutamine 48 to asparagine 52 is G2. Residues aspartate 69 to glycine 72 are G3. Residues aspartate 69–isoleucine 73 and asparagine 131–aspartate 134 contribute to the GTP site. A G4 region spans residues asparagine 131 to aspartate 134. The segment at isoleucine 160–alanine 162 is G5. A KH type-2 domain is found at threonine 212–lysine 290.

This sequence belongs to the TRAFAC class TrmE-Era-EngA-EngB-Septin-like GTPase superfamily. Era GTPase family. Monomer.

It is found in the cytoplasm. Its subcellular location is the cell inner membrane. An essential GTPase that binds both GDP and GTP, with rapid nucleotide exchange. Plays a role in 16S rRNA processing and 30S ribosomal subunit biogenesis and possibly also in cell cycle regulation and energy metabolism. This is GTPase Era from Syntrophus aciditrophicus (strain SB).